Here is a 196-residue protein sequence, read N- to C-terminus: Large ribosomal subunit protein bL9 (196 aa).

Belongs to the bacterial ribosomal protein bL9 family.

Its function is as follows. Binds to the 23S rRNA. This chain is Large ribosomal subunit protein bL9, found in Rhodopseudomonas palustris (strain HaA2).